A 258-amino-acid chain; its full sequence is Small ribosomal subunit protein uS2 (258 aa).

It belongs to the universal ribosomal protein uS2 family.

The protein is Small ribosomal subunit protein uS2 of Leuconostoc citreum (strain KM20).